The primary structure comprises 345 residues: Methionine import ATP-binding protein MetN (345 aa).

The ABC transporter domain occupies 2-241 (IKLKNISKIF…PKTELAQEFI (240 aa)). Position 38 to 45 (38 to 45 (GASGAGKS)) interacts with ATP.

This sequence belongs to the ABC transporter superfamily. Methionine importer (TC 3.A.1.24) family. In terms of assembly, the complex is composed of two ATP-binding proteins (MetN), two transmembrane proteins (MetI) and a solute-binding protein (MetQ).

The protein resides in the cell inner membrane. It catalyses the reaction L-methionine(out) + ATP + H2O = L-methionine(in) + ADP + phosphate + H(+). It carries out the reaction D-methionine(out) + ATP + H2O = D-methionine(in) + ADP + phosphate + H(+). In terms of biological role, part of the ABC transporter complex MetNIQ involved in methionine import. Responsible for energy coupling to the transport system. This Mannheimia succiniciproducens (strain KCTC 0769BP / MBEL55E) protein is Methionine import ATP-binding protein MetN.